A 1129-amino-acid chain; its full sequence is MSSLSRELVFLILQFLDEEKFKETVHKLEQESGFFFNMKYFEEKVHAGEWDEVEKYLSGFTKVDDNRYSMKIFFEIRKQKYLEALDRHDRAKAVDILVKDLKVFSTFNEELYKEITQLLTLENFRENEQLSKYGDTKSARSIMLIELKKLIEANPLFREKLVFPTLKASRLRTLINQSLNWQHQLCKNPRPNPDIKTLFTDHTCTPPNGARASPVSVPLAAVPKAGGTYPPLTAHTPFQPPPAGPSLAGWMANAAAATSSVPSAVVAASSLPVPPNQAVPIMKRPTITDYQSAESEQLMKRLRPSGHGVDEATYPAPIPQPLWSVEDLPRTVACTLSQGSSVTSMDFHPTRHTLLLVGSTNGEITLWEVGMRERLFSKPFKIWDIQACSPQFQSVAKESSISINRVTWSPDGDLIGVAFAKHLIHLHAYQQPNETRQVLEIDAHSGAVNDIAFSRPNKQLCVVTCGDDRLIKVWDMHGQKLFSFEGHEAPVYSICPHHKESIQFIFSTSLDGKIKAWLYDHMGSRVDYDAPGKWCTTMLYSADGTRLFSCGTSKDGDSYLVEWNESEGSIKRTYSGFRKKSAGVGVVQFDTAQNHILAAGEDNQIKFWDVDNTTMLSSTEADGGLPGLPRLRFNKEGNLLAVTTVDNGFKILANADGLRTLRAFGNRPFEAFRSQYEASSMKVSGAPVVAGISPNIGRMDHIDRNSPAKPSPIMNGGDPASRSIDIKPRISEERPDKAKPWELMEVLNAQQCRVATMPETPDQASKVVRLLYTNSGVGLLALGSNAIQRLWKWARNDQNPSGKATANVVPQHWQPNSGLVMQNDTADTNPEDAVPCIALSKNDSYVMSACGGKVSLFNMMTFKVMTTFMPPPPASTFLAFHPQDNNIIAIGMEDSTIHIYNVRVDEVKTRLKGHQRRITGLAFSNNLQILVSSGADAQLCVWATDTWEKKKSVAIQMPAGKTPSGDTWVQFNSDWSRLLVVHETQLAIYDASKMERIYQWIPQDALSAPISHASYSRNSQLVFAAFTDGNIGIFDVENLRLRCRIAPPAYLSSAAINSNPSVYPLVVAAHPQESNQFAVGLSDGSVKVIEPLESEGKWGTTPPTENGVPNGRTSTSSATSNPAADQIQR.

Residues 4-36 (LSRELVFLILQFLDEEKFKETVHKLEQESGFFF) form the LisH domain. One can recognise a CTLH domain in the interval 34–92 (FFFNMKYFEEKVHAGEWDEVEKYLSGFTKVDDNRYSMKIFFEIRKQKYLEALDRHDRAK). WD repeat units follow at residues 337–377 (SQGS…RLFS), 398–437 (ESSI…ETRQ), 443–485 (AHSG…FSFE), 487–527 (HEAP…SRVD), 579–618 (KKSA…MLSS), 623–662 (GGLP…RTLR), 762–801 (DQAS…QNPS), 829–867 (NPED…VMTT), 870–910 (PPPP…VKTR), 913–952 (GHQR…KKKS), and 1005–1044 (ALSA…LRCR). The interval 1092–1129 (LESEGKWGTTPPTENGVPNGRTSTSSATSNPAADQIQR) is disordered. Positions 1113 to 1129 (TSTSSATSNPAADQIQR) are enriched in low complexity.

In terms of assembly, tetramer. Interacts with D53. Interacts with WOX1. Interacts with MOF1. Expressed in panicles, stems, leaves, spikelets and seed endosperm.

Its function is as follows. Probable downstream regulator of strigolactones signaling. The polypeptide is Protein TPR1 (Oryza sativa subsp. japonica (Rice)).